Reading from the N-terminus, the 274-residue chain is Diaminopimelate epimerase (274 aa).

3 residues coordinate substrate: Asn11, Gln44, and Asn64. Catalysis depends on Cys73, which acts as the Proton donor. Substrate-binding positions include 74–75 (GN), Asn157, Asn190, and 208–209 (ER). Catalysis depends on Cys217, which acts as the Proton acceptor. 218 to 219 (GS) lines the substrate pocket.

The protein belongs to the diaminopimelate epimerase family. In terms of assembly, homodimer.

The protein localises to the cytoplasm. It catalyses the reaction (2S,6S)-2,6-diaminopimelate = meso-2,6-diaminopimelate. It functions in the pathway amino-acid biosynthesis; L-lysine biosynthesis via DAP pathway; DL-2,6-diaminopimelate from LL-2,6-diaminopimelate: step 1/1. Its function is as follows. Catalyzes the stereoinversion of LL-2,6-diaminopimelate (L,L-DAP) to meso-diaminopimelate (meso-DAP), a precursor of L-lysine and an essential component of the bacterial peptidoglycan. In Actinobacillus succinogenes (strain ATCC 55618 / DSM 22257 / CCUG 43843 / 130Z), this protein is Diaminopimelate epimerase.